Here is a 926-residue protein sequence, read N- to C-terminus: Probable zinc protease PqqL (926 aa).

A Zn(2+)-binding site is contributed by His79. Glu82 (proton acceptor) is an active-site residue. Zn(2+)-binding residues include His83 and Glu159.

It belongs to the peptidase M16 family. The cofactor is Zn(2+).

This chain is Probable zinc protease PqqL (pqqL), found in Haemophilus influenzae (strain ATCC 51907 / DSM 11121 / KW20 / Rd).